Reading from the N-terminus, the 269-residue chain is Tryptophan synthase alpha chain (269 aa).

Residues glutamate 49 and aspartate 60 each act as proton acceptor in the active site.

It belongs to the TrpA family. Tetramer of two alpha and two beta chains.

It carries out the reaction (1S,2R)-1-C-(indol-3-yl)glycerol 3-phosphate + L-serine = D-glyceraldehyde 3-phosphate + L-tryptophan + H2O. Its pathway is amino-acid biosynthesis; L-tryptophan biosynthesis; L-tryptophan from chorismate: step 5/5. Functionally, the alpha subunit is responsible for the aldol cleavage of indoleglycerol phosphate to indole and glyceraldehyde 3-phosphate. In Pseudomonas putida (strain GB-1), this protein is Tryptophan synthase alpha chain.